We begin with the raw amino-acid sequence, 304 residues long: UDP-3-O-acyl-N-acetylglucosamine deacetylase (304 aa).

3 residues coordinate Zn(2+): H78, H237, and D241. Catalysis depends on H264, which acts as the Proton donor.

The protein belongs to the LpxC family. Zn(2+) serves as cofactor.

The enzyme catalyses a UDP-3-O-[(3R)-3-hydroxyacyl]-N-acetyl-alpha-D-glucosamine + H2O = a UDP-3-O-[(3R)-3-hydroxyacyl]-alpha-D-glucosamine + acetate. Its pathway is glycolipid biosynthesis; lipid IV(A) biosynthesis; lipid IV(A) from (3R)-3-hydroxytetradecanoyl-[acyl-carrier-protein] and UDP-N-acetyl-alpha-D-glucosamine: step 2/6. In terms of biological role, catalyzes the hydrolysis of UDP-3-O-myristoyl-N-acetylglucosamine to form UDP-3-O-myristoylglucosamine and acetate, the committed step in lipid A biosynthesis. This is UDP-3-O-acyl-N-acetylglucosamine deacetylase from Marinobacter nauticus (strain ATCC 700491 / DSM 11845 / VT8) (Marinobacter aquaeolei).